The primary structure comprises 465 residues: VGFKAGVKDYKLTYYTPEYETKDTDILAAFRVTPQPGVPPEEAGAAVAAESSTGTWTTVWTDGLTSLDRYKGRCYHIEPVAGEENQFIAYVAYPLDLFEEGSVTNMFTSIVGNVFGFKAXRALRLEDLRIPSAYTKTFQGPPHGIQVERDKLNKYGRPLLGCTIKPKLGLSAKNYGRAVYECLRGGLDFTKDDENVNSQPFMRWRDRFLFCAEAIYKSQAETGEIKGHYLNATAGTCEEMIKRAVFARELAVPIVMHDYLTGGFTANTSLAHYCRDNGLLLHIHRAMHAVIDRQKNHGMHFRVLAKALRLSGGDHIHAGTVVGKLEGEREITLGFVDLLRDDFVEKDRSRGIYFTQDWVSLPGVLPVASGGIHVWHMPALTEIFGDDSVLQFGGGTLGHPWGNAPGAVANRVALEACVKARNEGRDLAREGNEIIREASKWSPELAAACEVWKEIKLEFEAMDTL.

Residue lysine 4 is modified to N6,N6,N6-trimethyllysine. Substrate contacts are provided by asparagine 113 and threonine 163. The Proton acceptor role is filled by lysine 165. Lysine 167 contacts substrate. 3 residues coordinate Mg(2+): lysine 191, aspartate 193, and glutamate 194. Position 191 is an N6-carboxylysine (lysine 191). Histidine 284 acts as the Proton acceptor in catalysis. The substrate site is built by arginine 285, histidine 317, and serine 369.

It belongs to the RuBisCO large chain family. Type I subfamily. Heterohexadecamer of 8 large chains and 8 small chains; disulfide-linked. The disulfide link is formed within the large subunit homodimers. Mg(2+) serves as cofactor. The disulfide bond which can form in the large chain dimeric partners within the hexadecamer appears to be associated with oxidative stress and protein turnover.

It is found in the plastid. The protein localises to the chloroplast. It carries out the reaction 2 (2R)-3-phosphoglycerate + 2 H(+) = D-ribulose 1,5-bisphosphate + CO2 + H2O. The catalysed reaction is D-ribulose 1,5-bisphosphate + O2 = 2-phosphoglycolate + (2R)-3-phosphoglycerate + 2 H(+). In terms of biological role, ruBisCO catalyzes two reactions: the carboxylation of D-ribulose 1,5-bisphosphate, the primary event in carbon dioxide fixation, as well as the oxidative fragmentation of the pentose substrate in the photorespiration process. Both reactions occur simultaneously and in competition at the same active site. The polypeptide is Ribulose bisphosphate carboxylase large chain (Ulmus alata (Winged elm)).